A 474-amino-acid polypeptide reads, in one-letter code: Glutamate--tRNA ligase (474 aa).

The 'HIGH' region motif lies at 9-19 (PSPTGYLHVGG). The short motif at 240-244 (KLSKR) is the 'KMSKS' region element. Lys-243 serves as a coordination point for ATP.

It belongs to the class-I aminoacyl-tRNA synthetase family. Glutamate--tRNA ligase type 1 subfamily. In terms of assembly, monomer.

The protein localises to the cytoplasm. The catalysed reaction is tRNA(Glu) + L-glutamate + ATP = L-glutamyl-tRNA(Glu) + AMP + diphosphate. Functionally, catalyzes the attachment of glutamate to tRNA(Glu) in a two-step reaction: glutamate is first activated by ATP to form Glu-AMP and then transferred to the acceptor end of tRNA(Glu). In Vibrio vulnificus (strain CMCP6), this protein is Glutamate--tRNA ligase.